A 339-amino-acid chain; its full sequence is Nitrilase 2 (339 aa).

At Ser-2 the chain carries N-acetylserine. Residues 18 to 290 enclose the CN hydrolase domain; sequence VRATIVQAST…EGLITADLDL (273 aa). The active-site Proton acceptor is the Glu-58. Residue Lys-145 is the Proton donor of the active site. Catalysis depends on Cys-179, which acts as the Nucleophile.

The protein belongs to the carbon-nitrogen hydrolase superfamily. Nitrilase family.

Its subcellular location is the cell membrane. The catalysed reaction is a nitrile + 2 H2O = a carboxylate + NH4(+). In terms of biological role, can convert indole-3-acetonitrile to the plant hormone indole-3-acetic acid. In Arabidopsis thaliana (Mouse-ear cress), this protein is Nitrilase 2 (NIT2).